Consider the following 118-residue polypeptide: Holo-[acyl-carrier-protein] synthase (118 aa).

Mg(2+) contacts are provided by aspartate 6 and glutamate 55.

The protein belongs to the P-Pant transferase superfamily. AcpS family. Mg(2+) is required as a cofactor.

The protein localises to the cytoplasm. It catalyses the reaction apo-[ACP] + CoA = holo-[ACP] + adenosine 3',5'-bisphosphate + H(+). Transfers the 4'-phosphopantetheine moiety from coenzyme A to a Ser of acyl-carrier-protein. This is Holo-[acyl-carrier-protein] synthase from Chlorobium chlorochromatii (strain CaD3).